The following is a 175-amino-acid chain: Adenine phosphoribosyltransferase (175 aa).

It belongs to the purine/pyrimidine phosphoribosyltransferase family. In terms of assembly, homodimer.

It is found in the cytoplasm. The catalysed reaction is AMP + diphosphate = 5-phospho-alpha-D-ribose 1-diphosphate + adenine. The protein operates within purine metabolism; AMP biosynthesis via salvage pathway; AMP from adenine: step 1/1. Catalyzes a salvage reaction resulting in the formation of AMP, that is energically less costly than de novo synthesis. This is Adenine phosphoribosyltransferase from Francisella philomiragia subsp. philomiragia (strain ATCC 25017 / CCUG 19701 / FSC 153 / O#319-036).